The primary structure comprises 228 residues: 7-cyano-7-deazaguanine synthase (228 aa).

9–19 (LSGGPDSTTVL) is a binding site for ATP. Residues cysteine 193, cysteine 203, cysteine 206, and cysteine 209 each coordinate Zn(2+).

Belongs to the QueC family. Requires Zn(2+) as cofactor.

The catalysed reaction is 7-carboxy-7-deazaguanine + NH4(+) + ATP = 7-cyano-7-deazaguanine + ADP + phosphate + H2O + H(+). It functions in the pathway purine metabolism; 7-cyano-7-deazaguanine biosynthesis. Catalyzes the ATP-dependent conversion of 7-carboxy-7-deazaguanine (CDG) to 7-cyano-7-deazaguanine (preQ(0)). This Rickettsia rickettsii (strain Iowa) protein is 7-cyano-7-deazaguanine synthase.